A 117-amino-acid chain; its full sequence is Flagellar transcriptional regulator FlhD (117 aa).

The protein belongs to the FlhD family. In terms of assembly, homodimer; disulfide-linked. Forms a heterohexamer composed of two FlhC and four FlhD subunits. Each FlhC binds a FlhD dimer, forming a heterotrimer, and a hexamer assembles by dimerization of two heterotrimers.

It localises to the cytoplasm. Functions in complex with FlhC as a master transcriptional regulator that regulates transcription of several flagellar and non-flagellar operons by binding to their promoter region. Activates expression of class 2 flagellar genes, including fliA, which is a flagellum-specific sigma factor that turns on the class 3 genes. Also regulates genes whose products function in a variety of physiological pathways. This Erwinia amylovora (strain CFBP1430) protein is Flagellar transcriptional regulator FlhD.